The primary structure comprises 192 residues: Large ribosomal subunit protein uL24c (192 aa).

A chloroplast-targeting transit peptide spans 1-47 (MAAMAALQSSFTSLSLSSNSFLGQRLFPSPTTLQVKTEGHSPCLIVM).

Component of the chloroplast large ribosomal subunit (LSU). Mature 70S chloroplast ribosomes of higher plants consist of a small (30S) and a large (50S) subunit. The 30S small subunit contains 1 molecule of ribosomal RNA (16S rRNA) and 24 different proteins. The 50S large subunit contains 3 rRNA molecules (23S, 5S and 4.5S rRNA) and 33 different proteins.

It is found in the plastid. The protein localises to the chloroplast. Component of the chloroplast ribosome (chloro-ribosome), a dedicated translation machinery responsible for the synthesis of chloroplast genome-encoded proteins, including proteins of the transcription and translation machinery and components of the photosynthetic apparatus. This chain is Large ribosomal subunit protein uL24c (RPL24), found in Spinacia oleracea (Spinach).